The sequence spans 150 residues: Transcriptional repressor NrdR (150 aa).

The segment at 3–34 is a zinc-finger region; sequence CPFCGQLDSKVVDSRPDKGGAAIRRRRECESC. Residues 49–139 form the ATP-cone domain; it reads PLVLKKDGRR…VYRSFKDVNE (91 aa).

Belongs to the NrdR family. The cofactor is Zn(2+).

Functionally, negatively regulates transcription of bacterial ribonucleotide reductase nrd genes and operons by binding to NrdR-boxes. In Geobacter sulfurreducens (strain ATCC 51573 / DSM 12127 / PCA), this protein is Transcriptional repressor NrdR.